Here is a 237-residue protein sequence, read N- to C-terminus: MTPQDFYRTLEEDGFSLASKQKEQFDTYFKLLVEWNTKINLTAITEKNEVYLKHFYDSIAPILQGFLANEPIKLLDIGAGAGFPSLPMKILFPNLEVTIIDSLNKRISFLTLLAQELGLENVHFFHGRAEDFGQDKAFRGQFDVVTARAVARMQVLSELTIPFLKIGGKLIALKAQAADQELEEAKNALCLLFGKVIKNHSYQLPNGDSRFITIVEKKKETPNKYPRKAGLPNKKPL.

Residues glycine 78, phenylalanine 83, 129–130 (AE), and arginine 148 each bind S-adenosyl-L-methionine.

This sequence belongs to the methyltransferase superfamily. RNA methyltransferase RsmG family.

It is found in the cytoplasm. Functionally, specifically methylates the N7 position of a guanine in 16S rRNA. The polypeptide is Ribosomal RNA small subunit methyltransferase G (Streptococcus pyogenes serotype M4 (strain MGAS10750)).